Here is a 562-residue protein sequence, read N- to C-terminus: Formate--tetrahydrofolate ligase (562 aa).

71 to 78 (TPAGEGKS) contributes to the ATP binding site.

This sequence belongs to the formate--tetrahydrofolate ligase family.

The catalysed reaction is (6S)-5,6,7,8-tetrahydrofolate + formate + ATP = (6R)-10-formyltetrahydrofolate + ADP + phosphate. Its pathway is one-carbon metabolism; tetrahydrofolate interconversion. This chain is Formate--tetrahydrofolate ligase, found in Bacillus cereus (strain AH187).